The primary structure comprises 240 residues: Methylthioribulose-1-phosphate dehydratase (240 aa).

Cys100 is a binding site for substrate. Positions 117 and 119 each coordinate Zn(2+). The Proton donor/acceptor role is filled by Glu146. His202 serves as a coordination point for Zn(2+).

Belongs to the aldolase class II family. MtnB subfamily. Requires Zn(2+) as cofactor.

It is found in the cytoplasm. The enzyme catalyses 5-(methylsulfanyl)-D-ribulose 1-phosphate = 5-methylsulfanyl-2,3-dioxopentyl phosphate + H2O. The protein operates within amino-acid biosynthesis; L-methionine biosynthesis via salvage pathway; L-methionine from S-methyl-5-thio-alpha-D-ribose 1-phosphate: step 2/6. Catalyzes the dehydration of methylthioribulose-1-phosphate (MTRu-1-P) into 2,3-diketo-5-methylthiopentyl-1-phosphate (DK-MTP-1-P). This is Methylthioribulose-1-phosphate dehydratase from Emericella nidulans (strain FGSC A4 / ATCC 38163 / CBS 112.46 / NRRL 194 / M139) (Aspergillus nidulans).